Reading from the N-terminus, the 199-residue chain is ORF1/1 protein (199 aa).

Residues 96-155 (ESDALTLSPVHRPKRPKRDTQVKEKTPEKDSDSAVQLRRLQPWIHSSQETKDEEEEIPEG) form a disordered region. Basic and acidic residues predominate over residues 113-127 (RDTQVKEKTPEKDSD).

The sequence is that of ORF1/1 protein from Torque teno virus (isolate Human/Finland/Hel32/2002) (TTV).